The primary structure comprises 33 residues: Photosystem II reaction center protein T (33 aa).

The chain crosses the membrane as a helical span at residues 3 to 23 (ALVYTFLLVSTLGIIFFAIFF).

Belongs to the PsbT family. In terms of assembly, PSII is composed of 1 copy each of membrane proteins PsbA, PsbB, PsbC, PsbD, PsbE, PsbF, PsbH, PsbI, PsbJ, PsbK, PsbL, PsbM, PsbT, PsbY, PsbZ, Psb30/Ycf12, at least 3 peripheral proteins of the oxygen-evolving complex and a large number of cofactors. It forms dimeric complexes.

The protein resides in the plastid. The protein localises to the chloroplast thylakoid membrane. In terms of biological role, found at the monomer-monomer interface of the photosystem II (PS II) dimer, plays a role in assembly and dimerization of PSII. PSII is a light-driven water plastoquinone oxidoreductase, using light energy to abstract electrons from H(2)O, generating a proton gradient subsequently used for ATP formation. This chain is Photosystem II reaction center protein T, found in Helianthus annuus (Common sunflower).